The primary structure comprises 193 residues: Ion-translocating oxidoreductase complex subunit A (193 aa).

6 helical membrane-spanning segments follow: residues 5 to 25, 39 to 59, 62 to 82, 102 to 122, 134 to 154, and 171 to 191; these read ALLF…FLGL, IGMG…SWLV, FILV…LVLA, LLGI…VVLL, TIYG…FAAI, and SIAL…TGLV.

Belongs to the NqrDE/RnfAE family. In terms of assembly, the complex is composed of six subunits: RnfA, RnfB, RnfC, RnfD, RnfE and RnfG.

The protein localises to the cell inner membrane. Its function is as follows. Part of a membrane-bound complex that couples electron transfer with translocation of ions across the membrane. In Pectobacterium carotovorum subsp. carotovorum (strain PC1), this protein is Ion-translocating oxidoreductase complex subunit A.